Reading from the N-terminus, the 337-residue chain is Glycine N(alpha)-acyltransferase (337 aa).

This sequence belongs to the acetyltransferase family.

The enzyme catalyses a (3R)-hydroxyacyl-[ACP] + glycine = a lyso-glycine lipid + holo-[ACP] + H(+). It catalyses the reaction (3R)-hydroxyhexadecanoyl-[ACP] + glycine = N-[(3R)-3-hydroxyhexadecanoyl]-glycine + holo-[ACP] + H(+). The protein operates within lipid metabolism. Is involved in the production of glycine lipids (GL), which are phosphorus-free membrane lipids important for fitness during growth of the human gut bacterium B.thetaiotaomicron in vivo and in vitro. Catalyzes the first step of GL biosynthesis, i.e. the N-acylation of glycine via addition of a 3-hydroxy fatty acyl group, to form a range of monoacylated glycine (also named lyso-glycine lipids or lyso-GL). Is important for the ability of B.thetaiotaomicron to adapt to stress and colonize the mammalian gut. Also seems to be required for the production of flavolipin, an acylated serine-glycine dipeptide. This chain is Glycine N(alpha)-acyltransferase, found in Bacteroides thetaiotaomicron (strain ATCC 29148 / DSM 2079 / JCM 5827 / CCUG 10774 / NCTC 10582 / VPI-5482 / E50).